The sequence spans 378 residues: Putative glutamate--cysteine ligase 2 (378 aa).

It belongs to the glutamate--cysteine ligase type 2 family. YbdK subfamily.

It carries out the reaction L-cysteine + L-glutamate + ATP = gamma-L-glutamyl-L-cysteine + ADP + phosphate + H(+). In terms of biological role, ATP-dependent carboxylate-amine ligase which exhibits weak glutamate--cysteine ligase activity. The polypeptide is Putative glutamate--cysteine ligase 2 (Jannaschia sp. (strain CCS1)).